The following is a 250-amino-acid chain: Imidazole glycerol phosphate synthase subunit HisF (250 aa).

Active-site residues include D11 and D130.

The protein belongs to the HisA/HisF family. In terms of assembly, heterodimer of HisH and HisF.

It localises to the cytoplasm. The enzyme catalyses 5-[(5-phospho-1-deoxy-D-ribulos-1-ylimino)methylamino]-1-(5-phospho-beta-D-ribosyl)imidazole-4-carboxamide + L-glutamine = D-erythro-1-(imidazol-4-yl)glycerol 3-phosphate + 5-amino-1-(5-phospho-beta-D-ribosyl)imidazole-4-carboxamide + L-glutamate + H(+). It participates in amino-acid biosynthesis; L-histidine biosynthesis; L-histidine from 5-phospho-alpha-D-ribose 1-diphosphate: step 5/9. Its function is as follows. IGPS catalyzes the conversion of PRFAR and glutamine to IGP, AICAR and glutamate. The HisF subunit catalyzes the cyclization activity that produces IGP and AICAR from PRFAR using the ammonia provided by the HisH subunit. This Bacteroides fragilis (strain YCH46) protein is Imidazole glycerol phosphate synthase subunit HisF.